Here is a 139-residue protein sequence, read N- to C-terminus: Putative nickel-responsive regulator (139 aa).

4 residues coordinate Ni(2+): His77, His88, His90, and Cys96.

Belongs to the transcriptional regulatory CopG/NikR family. Ni(2+) is required as a cofactor.

Functionally, transcriptional regulator. The chain is Putative nickel-responsive regulator from Haloarcula marismortui (strain ATCC 43049 / DSM 3752 / JCM 8966 / VKM B-1809) (Halobacterium marismortui).